The primary structure comprises 696 residues: Elongation factor G (696 aa).

One can recognise a tr-type G domain in the interval 10-290 (THFRNIGIAA…AVVDYLPSPL (281 aa)). Residues 19–26 (AHIDAGKT), 89–93 (DTPGH), and 143–146 (NKMD) contribute to the GTP site.

The protein belongs to the TRAFAC class translation factor GTPase superfamily. Classic translation factor GTPase family. EF-G/EF-2 subfamily.

The protein localises to the cytoplasm. In terms of biological role, catalyzes the GTP-dependent ribosomal translocation step during translation elongation. During this step, the ribosome changes from the pre-translocational (PRE) to the post-translocational (POST) state as the newly formed A-site-bound peptidyl-tRNA and P-site-bound deacylated tRNA move to the P and E sites, respectively. Catalyzes the coordinated movement of the two tRNA molecules, the mRNA and conformational changes in the ribosome. This Deinococcus geothermalis (strain DSM 11300 / CIP 105573 / AG-3a) protein is Elongation factor G.